The sequence spans 159 residues: Neuroglobin (159 aa).

The Globin domain maps to 3–151 (KLSEKDKELI…VVAAMSQGWA (149 aa)). Residues histidine 66 and histidine 98 each contribute to the heme b site.

Belongs to the globin family. As to quaternary structure, monomer. Homodimers and homotetramers. Mainly monomeric but also detected as part of homodimers and homotetramers.

Its subcellular location is the cytoplasm. The protein resides in the cytosol. It localises to the mitochondrion matrix. It carries out the reaction Fe(III)-heme b-[protein] + nitric oxide + H2O = Fe(II)-heme b-[protein] + nitrite + 2 H(+). Its function is as follows. Monomeric globin with a bis-histidyl six-coordinate heme-iron atom through which it can bind dioxygen, carbon monoxide and nitric oxide. Could help transport oxygen and increase its availability to the metabolically active neuronal tissues, though its low quantity in tissues as well as its high affinity for dioxygen, which may limit its oxygen-releasing ability, argue against it. The ferrous/deoxygenated form exhibits a nitrite reductase activity and it could produce nitric oxide which in turn inhibits cellular respiration in response to hypoxia. In its ferrous/deoxygenated state, it may also exhibit GDI (Guanine nucleotide Dissociation Inhibitor) activity toward heterotrimeric G-alpha proteins, thereby regulating signal transduction to facilitate neuroprotective responses in the wake of hypoxia and associated oxidative stress. This Chaenocephalus aceratus (Blackfin icefish) protein is Neuroglobin (ngb).